The following is a 175-amino-acid chain: Sec-independent protein translocase protein TatB (175 aa).

Residues 1–21 form a helical membrane-spanning segment; it reads MLDLGLSKMALIGVVALVVLG. Positions 96 to 115 are enriched in low complexity; sequence VSPGGSAAADAPDGPSAASG. Disordered stretches follow at residues 96-119 and 152-175; these read VSPG…EPSW and QVQS…ARFL. A compositionally biased stretch (basic residues) spans 160–175; it reads VARHRPASLRRPARFL.

It belongs to the TatB family. The Tat system comprises two distinct complexes: a TatABC complex, containing multiple copies of TatA, TatB and TatC subunits, and a separate TatA complex, containing only TatA subunits. Substrates initially bind to the TatABC complex, which probably triggers association of the separate TatA complex to form the active translocon.

It is found in the cell inner membrane. Part of the twin-arginine translocation (Tat) system that transports large folded proteins containing a characteristic twin-arginine motif in their signal peptide across membranes. Together with TatC, TatB is part of a receptor directly interacting with Tat signal peptides. TatB may form an oligomeric binding site that transiently accommodates folded Tat precursor proteins before their translocation. This Burkholderia pseudomallei (strain 1710b) protein is Sec-independent protein translocase protein TatB.